An 88-amino-acid polypeptide reads, in one-letter code: Electron transfer flavoprotein regulatory factor 1 (88 aa).

It belongs to the complex I LYR family. As to quaternary structure, homotetramer. Interacts with NDUFAB1. Interacts with ETFA. Interacts with ETFB.

The protein localises to the mitochondrion. Functionally, acts as a regulator of the electron transfer flavoprotein by promoting the removal of flavin from the ETF holoenzyme (composed of ETFA and ETFB). This chain is Electron transfer flavoprotein regulatory factor 1, found in Bos taurus (Bovine).